Reading from the N-terminus, the 156-residue chain is Small ribosomal subunit protein uS7 (156 aa).

It belongs to the universal ribosomal protein uS7 family. As to quaternary structure, part of the 30S ribosomal subunit. Contacts proteins S9 and S11.

One of the primary rRNA binding proteins, it binds directly to 16S rRNA where it nucleates assembly of the head domain of the 30S subunit. Is located at the subunit interface close to the decoding center, probably blocks exit of the E-site tRNA. This chain is Small ribosomal subunit protein uS7, found in Buchnera aphidicola subsp. Cinara cedri (strain Cc).